A 291-amino-acid chain; its full sequence is uncharacterized protein (291 aa).

The region spanning 191-289 (KQMLNWIHLH…NMTPLSYKKM (99 aa)) is the HTH araC/xylS-type domain. 2 DNA-binding regions (H-T-H motif) span residues 208–229 (EDIA…KRML) and 256–279 (VTEV…QQAM).

This is an uncharacterized protein from Bacillus subtilis (strain 168).